A 2527-amino-acid polypeptide reads, in one-letter code: Leucine-rich repeat serine/threonine-protein kinase 2 (2527 aa).

The interval 1-969 (MASGSCQGCE…RSSKLQSHMR (969 aa)) is required for RAB29-mediated activation. Residues 319-348 (LTETIFLNQDLEEKNENQENDDEGEEDKLF) are a coiled coil. A phosphoserine mark is found at Ser910, Ser935, Ser955, and Ser973. LRR repeat units follow at residues 983-1004 (YITS…SQKC), 1012-1033 (HLEK…LCET), 1036-1057 (SLTH…LLKM), 1059-1080 (CIAN…DPTV), 1084-1105 (TLKQ…LTDV), 1108-1129 (KLEQ…LRLK), 1130-1150 (ELKI…NFLE), 1156-1171 (ESFS…MPFL), 1174-1196 (SMTI…LNLP), 1197-1218 (HLRS…AHWK), 1221-1245 (NLRE…YLWS), 1246-1267 (RVEK…IGCL), and 1269-1291 (NLTS…MGKL). At Ser1292 the chain carries Phosphoserine; by autocatalysis. Residues 1328–1511 (KAVPYNRMKL…KTIINESLNF (184 aa)) enclose the Roc domain. 1341–1348 (GNTGSGKT) lines the GTP pocket. Ser1444 bears the Phosphoserine mark. The region spanning 1546–1740 (PVIDRKRLLQ…RMYWRQGIYL (195 aa)) is the COR domain. A Protein kinase domain is found at 1879–2138 (QAPEFLLGDG…FDILNSAELV (260 aa)). Residues Leu1885, Asp1887, Gly1888, Gly1891, Val1893, Ala1904, Lys1906, Met1947, Glu1948, Ala1950, Ser1954, and Arg1957 each coordinate ATP. The active-site Proton acceptor is the Asp1994. Positions 1998, 2001, 2016, and 2017 each coordinate ATP. 2098–2121 (EYGCAPWPMVEKLIKQCLKENPQE) provides a ligand contact to GTP. WD repeat units follow at residues 2139–2183 (CLTR…SFLD), 2188–2228 (GYTS…LVIN), 2233–2276 (KKRH…AIFE), 2281–2327 (KLKG…FSFS), 2333–2377 (QKLI…EVWD), 2402–2438 (KESK…LLLD), and 2443–2497 (RLIR…TVWD). 2295–2298 (NVST) is a binding site for GTP.

The protein belongs to the protein kinase superfamily. TKL Ser/Thr protein kinase family. As to quaternary structure, homodimer. Homotetramer; when activated by GTP-bound RAB29. Interacts with PRKN, PRDX3, and TPCN2. Interacts with VPS35. Interacts (via N-terminus) with RAB29; this interaction is direct and stimulates kinase activity. Interacts (via ROC domain) with SEC16A. Interacts with APP; interaction promotes phosphorylation of 'Thr-743' of APP. Interacts with MAPT. Interacts with RAB8A, RAB10, and RAB12. Interacts (via N-terminus) with RAB32. Interacts with YWHAG; this interaction is dependent on phosphorylation of Ser-910 and either Ser-935 or Ser-1444. Interacts with SFN; this interaction is dependent on phosphorylation of Ser-910 and/or Ser-935. Mg(2+) is required as a cofactor. In terms of processing, autophosphorylated at Ser-1292; autophosphorylation is stimulated by RAB29. Phosphorylation of Ser-910 and either Ser-935 or Ser-1444 facilitates interaction with YWHAG. Phosphorylation of Ser-910 and/or Ser-935 facilitates interaction with SFN. Ubiquitinated by TRIM1; undergoes 'Lys-48'-linked polyubiquitination leading to proteasomal degradation. As to expression, expressed in pyramidal neurons in all cortical laminae of the visual cortex, in neurons of the substantia nigra pars compacta and caudate putamen (at protein level). Expressed in neutrophils (at protein level). Expressed in the brain. Expressed throughout the adult brain, but at a lower level than in heart and liver. Also expressed in placenta, lung, skeletal muscle, kidney and pancreas. In the brain, expressed in the cerebellum, cerebral cortex, medulla, spinal cord occipital pole, frontal lobe, temporal lobe and putamen. Expression is particularly high in brain dopaminoceptive areas.

Its subcellular location is the cytoplasmic vesicle. It localises to the perikaryon. The protein localises to the golgi apparatus membrane. It is found in the cell projection. The protein resides in the axon. Its subcellular location is the dendrite. It localises to the endoplasmic reticulum membrane. The protein localises to the secretory vesicle. It is found in the synaptic vesicle membrane. The protein resides in the endosome. Its subcellular location is the lysosome. It localises to the mitochondrion outer membrane. The protein localises to the cytoplasm. It is found in the cytoskeleton. The protein resides in the phagosome. It carries out the reaction L-threonyl-[protein] + ATP = O-phospho-L-threonyl-[protein] + ADP + H(+). The catalysed reaction is L-seryl-[protein] + ATP = O-phospho-L-seryl-[protein] + ADP + H(+). The enzyme catalyses GTP + H2O = GDP + phosphate + H(+). Kinase activity is regulated by the GTPase activity of the ROC domain. GTP-bound LRRK2 kinase activity is stimulated by RAB29. Phosphorylation of RAB10 'Thr-73' is stimulated by RAB29 and RAB32. Inhibited by small molecule inhibitor MLi-2. Serine/threonine-protein kinase which phosphorylates a broad range of proteins involved in multiple processes such as neuronal plasticity, innate immunity, autophagy, and vesicle trafficking. Is a key regulator of RAB GTPases by regulating the GTP/GDP exchange and interaction partners of RABs through phosphorylation. Phosphorylates RAB3A, RAB3B, RAB3C, RAB3D, RAB5A, RAB5B, RAB5C, RAB8A, RAB8B, RAB10, RAB12, RAB29, RAB35, and RAB43. Regulates the RAB3IP-catalyzed GDP/GTP exchange for RAB8A through the phosphorylation of 'Thr-72' on RAB8A. Inhibits the interaction between RAB8A and GDI1 and/or GDI2 by phosphorylating 'Thr-72' on RAB8A. Regulates primary ciliogenesis through phosphorylation of RAB8A and RAB10, which promotes SHH signaling in the brain. Together with RAB29, plays a role in the retrograde trafficking pathway for recycling proteins, such as mannose-6-phosphate receptor (M6PR), between lysosomes and the Golgi apparatus in a retromer-dependent manner. Regulates neuronal process morphology in the intact central nervous system (CNS). Plays a role in synaptic vesicle trafficking. Plays an important role in recruiting SEC16A to endoplasmic reticulum exit sites (ERES) and in regulating ER to Golgi vesicle-mediated transport and ERES organization. Positively regulates autophagy through a calcium-dependent activation of the CaMKK/AMPK signaling pathway. The process involves activation of nicotinic acid adenine dinucleotide phosphate (NAADP) receptors, increase in lysosomal pH, and calcium release from lysosomes. Phosphorylates PRDX3. By phosphorylating APP on 'Thr-743', which promotes the production and the nuclear translocation of the APP intracellular domain (AICD), regulates dopaminergic neuron apoptosis. Acts as a positive regulator of innate immunity by mediating phosphorylation of RIPK2 downstream of NOD1 and NOD2, thereby enhancing RIPK2 activation. Independent of its kinase activity, inhibits the proteasomal degradation of MAPT, thus promoting MAPT oligomerization and secretion. In addition, has GTPase activity via its Roc domain which regulates LRRK2 kinase activity. Recruited by RAB29/RAB7L1 to overloaded lysosomes where it phosphorylates and stabilizes RAB8A and RAB10 which promote lysosomal content release and suppress lysosomal enlargement through the EHBP1 and EHBP1L1 effector proteins. The polypeptide is Leucine-rich repeat serine/threonine-protein kinase 2 (LRRK2) (Homo sapiens (Human)).